The chain runs to 292 residues: Homoserine kinase (292 aa).

84 to 94 serves as a coordination point for ATP; it reads PLSRGLGSSSA.

This sequence belongs to the GHMP kinase family. Homoserine kinase subfamily.

The protein localises to the cytoplasm. It carries out the reaction L-homoserine + ATP = O-phospho-L-homoserine + ADP + H(+). Its pathway is amino-acid biosynthesis; L-threonine biosynthesis; L-threonine from L-aspartate: step 4/5. Its function is as follows. Catalyzes the ATP-dependent phosphorylation of L-homoserine to L-homoserine phosphate. This is Homoserine kinase from Campylobacter jejuni subsp. jejuni serotype O:2 (strain ATCC 700819 / NCTC 11168).